Reading from the N-terminus, the 623-residue chain is Calnexin (623 aa).

The signal sequence occupies residues 1–21; the sequence is MLNRKWSFVFLTFLLVISVNA. D108 serves as a coordination point for Ca(2+). An intrachain disulfide couples C151 to C185. The an alpha-D-glucoside site is built by Y155, K157, Y176, and D183. An N-linked (GlcNAc...) asparagine glycan is attached at N202. A disordered region spans residues 260-337; it reads SLTPPKEIFD…QKPQDWDEDM (78 aa). Over residues 266 to 276 the composition is skewed to basic and acidic residues; the sequence is EIFDETDLKPE. The segment at 267–400 is p domain (Extended arm); that stretch reads IFDETDLKPE…RLIDNPNYFE (134 aa). 5 repeat units span residues 269–281, 286–298, 305–317, 324–336, and 339–349. 4 X approximate repeats regions lie at residues 269–336 and 339–396; these read DETD…WDED and GSWE…IDNP. Acidic residues-rich tracts occupy residues 277-287 and 314-323; these read DWDEREQIEDE and WNEEENELIP. C351 and C357 are disulfide-bonded. Repeat copies occupy residues 358–368, 372–382, and 386–396. E416 contributes to the an alpha-D-glucoside binding site. Residue D427 coordinates Ca(2+). A helical transmembrane segment spans residues 480 to 500; that stretch reads LWAVYILCILLPLIAIGVFCF. Residues 536–623 are disordered; that stretch reads IAEDEEDNQP…AKRRTARRGD (88 aa). Residues 556–565 show a composition bias toward acidic residues; sequence IDEDEQDEVE. The span at 566 to 581 shows a compositional bias: low complexity; sequence QQPSSSKTASSESSSA. The segment covering 614 to 623 has biased composition (basic residues); it reads AKRRTARRGD.

The protein belongs to the calreticulin family. Post-translationally, glycosylation is important for its biological activity.

The protein localises to the endoplasmic reticulum membrane. It is found in the cytoplasm. Its subcellular location is the perinuclear region. The protein resides in the cytoplasmic vesicle. In terms of biological role, calcium-binding protein that interacts with newly synthesized monoglucosylated glycoproteins in the endoplasmic reticulum. It may act in assisting protein assembly and/or in the retention within the ER of unassembled protein subunits. It seems to play a major role in the quality control apparatus of the ER by the retention of incorrectly folded proteins. Required for embryogenesis and larval development under heat and ER stress conditions. May be important for germ cell development. Involved in neuronal necrotic cell death. The chain is Calnexin from Caenorhabditis briggsae.